We begin with the raw amino-acid sequence, 95 residues long: Osteocalcin-2 (95 aa).

An N-terminal signal peptide occupies residues 1-23 (MRTLSLLTLLALAALCLSDLTDA). The propeptide occupies 24 to 49 (KPSGPESDKAFMSKQEGNKVVNRLRR). One can recognise a Gla domain in the interval 46–92 (RLRRYLGASVPSPDPLEPTREQCELNPACDELSDQYGLKTAYKRIYG). Ca(2+) contacts are provided by Glu-62, Glu-66, Glu-69, and Asp-75. Cys-68 and Cys-74 are oxidised to a cystine.

This sequence belongs to the osteocalcin/matrix Gla protein family. In terms of processing, gamma-carboxyglutamate residues are formed by vitamin K dependent carboxylation by GGCX. These residues are essential for the binding of calcium. Carboxylated in a Ptprv/Esp-dependent process. Decarboxylation promotes the hormone activity. Bone.

The protein localises to the secreted. Functionally, the carboxylated form is one of the main organic components of the bone matrix, which constitutes 1-2% of the total bone protein: it acts as a negative regulator of bone formation and is required to limit bone formation without impairing bone resorption or mineralization. The carboxylated form binds strongly to apatite and calcium. The uncarboxylated form acts as a hormone secreted by osteoblasts, which regulates different cellular processes, such as energy metabolism, male fertility and brain development. Regulates of energy metabolism by acting as a hormone favoring pancreatic beta-cell proliferation, insulin secretion and sensitivity and energy expenditure. Uncarboxylated osteocalcin hormone also promotes testosterone production in the testes: acts as a ligand for G protein-coupled receptor GPRC6A at the surface of Leydig cells, initiating a signaling response that promotes the expression of enzymes required for testosterone synthesis in a CREB-dependent manner. Also acts as a regulator of brain development: osteocalcin hormone crosses the blood-brain barrier and acts as a ligand for GPR158 on neurons, initiating a signaling response that prevents neuronal apoptosis in the hippocampus, favors the synthesis of all monoamine neurotransmitters and inhibits that of gamma-aminobutyric acid (GABA). Osteocalcin also crosses the placenta during pregnancy and maternal osteocalcin is required for fetal brain development. In Mus musculus (Mouse), this protein is Osteocalcin-2 (Bglap2).